Consider the following 755-residue polypeptide: Proprotein convertase subtilisin/kexin type 4 (755 aa).

The N-terminal stretch at 1–25 is a signal peptide; the sequence is MRPAPIALWLRLVLALALVRPRAVG. Positions 26–113 are excised as a propeptide; it reads WAPVRAPIYV…QQTLQRRVKR (88 aa). The region spanning 126–440 is the Peptidase S8 domain; that stretch reads QWYMNSEAQP…YGLLDAGLLV (315 aa). Catalysis depends on charge relay system residues aspartate 158, histidine 199, and serine 373. Positions 449-581 constitute a P/Homo B domain; the sequence is TQPQRKCAVR…TLLLYGTAED (133 aa). Asparagine 475 and asparagine 629 each carry an N-linked (GlcNAc...) asparagine glycan. Residues 709-729 form a helical membrane-spanning segment; it reads AMVLSLLAVTLGGPVLCGMSM.

This sequence belongs to the peptidase S8 family. Furin subfamily. As to quaternary structure, the proPCSK4 form interacts with HSPA5; the interaction takes place at the endoplasmic reticulum. N-glycosylated. In terms of processing, synthesized in the endoplasmic reticulum as a zymogen, is matured by autocatalytic cleavage between the prodomain and the catalytic domain. As to expression, placenta.

The protein resides in the membrane. It is found in the cytoplasmic vesicle. The protein localises to the secretory vesicle. It localises to the acrosome membrane. In terms of biological role, proprotein convertase involved in the processing of hormone and other protein precursors at sites comprised of pairs of basic amino acid residues. In males, important for ADAM2 processing as well as other acrosomal proteins with roles in fertilization and critical for normal fertilization events such as sperm capacitation, acrosome reaction and binding of sperm to zona pellucida. Also plays a role in female fertility, involved in the regulation of trophoblast migration and placental development, may be through the proteolytical processing and activation of proteins such as IGF2. May also participate in folliculogenesis in the ovaries. This Homo sapiens (Human) protein is Proprotein convertase subtilisin/kexin type 4.